Here is a 313-residue protein sequence, read N- to C-terminus: uncharacterized protein (313 aa).

An N-acetyltransferase domain is found at 6–152 (YDILENPEPN…YHASMEKMTG (147 aa)).

Its function is as follows. To the C-terminal of C.elegans F21C10.9. This is an uncharacterized protein from Caenorhabditis elegans.